Reading from the N-terminus, the 400-residue chain is Enoyl-[acyl-carrier-protein] reductase [NADH] (400 aa).

NAD(+)-binding positions include 48 to 53, 74 to 75, 111 to 112, and 139 to 140; these read GASTGY, FE, DA, and LA. Residue Tyr-225 coordinates substrate. The Proton donor role is filled by Tyr-235. NAD(+) contacts are provided by residues Lys-244 and 273–275; that span reads VVT.

The protein belongs to the TER reductase family. In terms of assembly, monomer.

It catalyses the reaction a 2,3-saturated acyl-[ACP] + NAD(+) = a (2E)-enoyl-[ACP] + NADH + H(+). It participates in lipid metabolism; fatty acid biosynthesis. Its function is as follows. Involved in the final reduction of the elongation cycle of fatty acid synthesis (FAS II). Catalyzes the reduction of a carbon-carbon double bond in an enoyl moiety that is covalently linked to an acyl carrier protein (ACP). In Burkholderia ambifaria (strain ATCC BAA-244 / DSM 16087 / CCUG 44356 / LMG 19182 / AMMD) (Burkholderia cepacia (strain AMMD)), this protein is Enoyl-[acyl-carrier-protein] reductase [NADH].